We begin with the raw amino-acid sequence, 500 residues long: Aspartyl/glutamyl-tRNA(Asn/Gln) amidotransferase subunit B (500 aa).

It belongs to the GatB/GatE family. GatB subfamily. As to quaternary structure, heterotrimer of A, B and C subunits.

It catalyses the reaction L-glutamyl-tRNA(Gln) + L-glutamine + ATP + H2O = L-glutaminyl-tRNA(Gln) + L-glutamate + ADP + phosphate + H(+). It carries out the reaction L-aspartyl-tRNA(Asn) + L-glutamine + ATP + H2O = L-asparaginyl-tRNA(Asn) + L-glutamate + ADP + phosphate + 2 H(+). Allows the formation of correctly charged Asn-tRNA(Asn) or Gln-tRNA(Gln) through the transamidation of misacylated Asp-tRNA(Asn) or Glu-tRNA(Gln) in organisms which lack either or both of asparaginyl-tRNA or glutaminyl-tRNA synthetases. The reaction takes place in the presence of glutamine and ATP through an activated phospho-Asp-tRNA(Asn) or phospho-Glu-tRNA(Gln). This Rhizobium johnstonii (strain DSM 114642 / LMG 32736 / 3841) (Rhizobium leguminosarum bv. viciae) protein is Aspartyl/glutamyl-tRNA(Asn/Gln) amidotransferase subunit B.